A 156-amino-acid polypeptide reads, in one-letter code: Small ribosomal subunit protein uS7 (156 aa).

The protein belongs to the universal ribosomal protein uS7 family. Part of the 30S ribosomal subunit. Contacts proteins S9 and S11.

Functionally, one of the primary rRNA binding proteins, it binds directly to 16S rRNA where it nucleates assembly of the head domain of the 30S subunit. Is located at the subunit interface close to the decoding center, probably blocks exit of the E-site tRNA. This chain is Small ribosomal subunit protein uS7, found in Baumannia cicadellinicola subsp. Homalodisca coagulata.